Here is a 193-residue protein sequence, read N- to C-terminus: Interferon lambda-3 (193 aa).

An N-terminal signal peptide occupies residues 1–19; that stretch reads MLLLLLPLLLAAVLTRTQA. Cystine bridges form between C35-C132, C69-C166, and C185-C192.

This sequence belongs to the lambda interferon family.

The protein localises to the secreted. Cytokine with antiviral, antitumour and immunomodulatory activities. Plays a critical role in the antiviral host defense, predominantly in the epithelial tissues. Acts as a ligand for the heterodimeric class II cytokine receptor composed of IL10RB and IFNLR1, and receptor engagement leads to the activation of the JAK/STAT signaling pathway resulting in the expression of IFN-stimulated genes (ISG), which mediate the antiviral state. Has a restricted receptor distribution and therefore restricted targets: is primarily active in epithelial cells and this cell type-selective action is because of the epithelial cell-specific expression of its receptor IFNLR1. Seems not to be essential for early virus-activated host defense in vaginal infection, but plays an important role in Toll-like receptor (TLR)-induced antiviral defense. Plays a significant role in the antiviral immune defense in the intestinal epithelium. Exerts an immunomodulatory effect by up-regulating MHC class I antigen expression. The protein is Interferon lambda-3 (Ifnl3) of Mus musculus (Mouse).